Here is a 113-residue protein sequence, read N- to C-terminus: MAGHRKLGRPTDQRMAMLRNQVTSLLKSGKIETTVTRAKETRSLAEKMITLGKRGDLQARRQALSFVTEEEVVKRLFDDIAPKYAERNGGYTRMYKVGPRRGDGAEIVILELV.

This sequence belongs to the bacterial ribosomal protein bL17 family. Part of the 50S ribosomal subunit. Contacts protein L32.

The polypeptide is Large ribosomal subunit protein bL17 (Clostridium tetani (strain Massachusetts / E88)).